The sequence spans 149 residues: Large ribosomal subunit protein bL9 (149 aa).

The protein belongs to the bacterial ribosomal protein bL9 family.

Functionally, binds to the 23S rRNA. The polypeptide is Large ribosomal subunit protein bL9 (Sulfurihydrogenibium sp. (strain YO3AOP1)).